A 942-amino-acid chain; its full sequence is Lambda-carrageenase (942 aa).

Positions 1–25 are cleaved as a signal peptide; the sequence is MKIKILSAMVASSLLIGCVIPTVKA.

In terms of assembly, monomer.

Its subcellular location is the secreted. It carries out the reaction Endohydrolysis of (1-&gt;4)-beta-linkages in the backbone of lambda-carrageenan, resulting in the tetrasaccharide alpha-D-Galp2,6S2-(1-&gt;3)-beta-D-Galp2S-(1-&gt;4)-alpha-D-Galp2,6S2-(1-&gt;3)-D-Galp2S.. Functionally, hydrolyzes lambda-carrageenan with inversion of anomeric configuration. Does not hydrolyze iota- and kappa-carrageenans, agarose or porphyran. The sequence is that of Lambda-carrageenase from Pseudoalteromonas carrageenovora (Alteromonas carrageenovora).